The following is a 68-amino-acid chain: Large ribosomal subunit protein bL35 (68 aa).

Basic residues-rich tracts occupy residues 1–11 (MPKLKTRSSAK) and 19–29 (SGKVKHGKAFA). The segment at 1–54 (MPKLKTRSSAKKRFDVKKSGKVKHGKAFAKHLFTFSKTPKSKRSNRGTGHLRDM) is disordered.

This sequence belongs to the bacterial ribosomal protein bL35 family.

The chain is Large ribosomal subunit protein bL35 from Myxococcus xanthus (strain DK1622).